We begin with the raw amino-acid sequence, 564 residues long: Centrosomal protein kizuna (564 aa).

The segment at 1 to 21 (MSEAGRAAAGPCPEVSPSRSQ) is disordered. The stretch at 28 to 50 (RCLRDSETRRLELERKLMEYKSS) forms a coiled coil. 5 disordered regions span residues 178–201 (QPAA…PTQA), 304–345 (TGPQ…EDEP), 442–465 (ECGD…PNDS), 487–519 (IGNN…RPEF), and 531–564 (AFWG…DFYD). Low complexity predominate over residues 313–324 (QQAASQDSSSSS). The span at 447–463 (SSVQSNESSYSLPSIPN) shows a compositional bias: polar residues. Positions 493-519 (EAKESQEMCSERSSSSERSGDLSRPEF) are enriched in basic and acidic residues.

It belongs to the kizuna family.

Its subcellular location is the cytoplasm. It is found in the cytoskeleton. The protein localises to the microtubule organizing center. The protein resides in the centrosome. It localises to the cilium basal body. Its function is as follows. Centrosomal protein required for establishing a robust mitotic centrosome architecture that can endure the forces that converge on the centrosomes during spindle formation. Required for stabilizing the expanded pericentriolar material around the centriole. This chain is Centrosomal protein kizuna (KIZ), found in Gallus gallus (Chicken).